A 348-amino-acid polypeptide reads, in one-letter code: Histidinol-phosphate aminotransferase (348 aa).

Lys-210 is modified (N6-(pyridoxal phosphate)lysine).

Belongs to the class-II pyridoxal-phosphate-dependent aminotransferase family. Histidinol-phosphate aminotransferase subfamily. Homodimer. Requires pyridoxal 5'-phosphate as cofactor.

The enzyme catalyses L-histidinol phosphate + 2-oxoglutarate = 3-(imidazol-4-yl)-2-oxopropyl phosphate + L-glutamate. Its pathway is amino-acid biosynthesis; L-histidine biosynthesis; L-histidine from 5-phospho-alpha-D-ribose 1-diphosphate: step 7/9. The polypeptide is Histidinol-phosphate aminotransferase (Pseudomonas putida (strain ATCC 47054 / DSM 6125 / CFBP 8728 / NCIMB 11950 / KT2440)).